The chain runs to 142 residues: Ribosome-binding factor A (142 aa).

The interval 118-142 (DKNGDAEVDDTQVDDEPSVDSEKGE) is disordered. Residues 123–136 (AEVDDTQVDDEPSV) are compositionally biased toward acidic residues.

Belongs to the RbfA family. In terms of assembly, monomer. Binds 30S ribosomal subunits, but not 50S ribosomal subunits or 70S ribosomes.

It localises to the cytoplasm. Its function is as follows. One of several proteins that assist in the late maturation steps of the functional core of the 30S ribosomal subunit. Associates with free 30S ribosomal subunits (but not with 30S subunits that are part of 70S ribosomes or polysomes). Required for efficient processing of 16S rRNA. May interact with the 5'-terminal helix region of 16S rRNA. This is Ribosome-binding factor A from Colwellia psychrerythraea (strain 34H / ATCC BAA-681) (Vibrio psychroerythus).